A 160-amino-acid polypeptide reads, in one-letter code: Transcription elongation factor GreA (160 aa).

Positions 3 to 84 (NIVDDKILLT…SKAKIIKADL (82 aa)) form a coiled coil.

This sequence belongs to the GreA/GreB family.

Its function is as follows. Necessary for efficient RNA polymerase transcription elongation past template-encoded arresting sites. The arresting sites in DNA have the property of trapping a certain fraction of elongating RNA polymerases that pass through, resulting in locked ternary complexes. Cleavage of the nascent transcript by cleavage factors such as GreA or GreB allows the resumption of elongation from the new 3'terminus. GreA releases sequences of 2 to 3 nucleotides. In Mesomycoplasma hyopneumoniae (strain J / ATCC 25934 / NCTC 10110) (Mycoplasma hyopneumoniae), this protein is Transcription elongation factor GreA.